The chain runs to 128 residues: MAKLSTDELLDAFKELTLIELSEFVKKFEETFDVTAAAPVAVAAAGGAAGAPAEAAEEQSEFDVILESAGDKKIGVIKEVRALTSLGLKEAKDLVDGAPKPVLEKVAKDAAEKAKAQLEGAGATVTLK.

It belongs to the bacterial ribosomal protein bL12 family. Homodimer. Part of the ribosomal stalk of the 50S ribosomal subunit. Forms a multimeric L10(L12)X complex, where L10 forms an elongated spine to which 2 to 4 L12 dimers bind in a sequential fashion. Binds GTP-bound translation factors.

Its function is as follows. Forms part of the ribosomal stalk which helps the ribosome interact with GTP-bound translation factors. Is thus essential for accurate translation. This is Large ribosomal subunit protein bL12 from Kineococcus radiotolerans (strain ATCC BAA-149 / DSM 14245 / SRS30216).